We begin with the raw amino-acid sequence, 208 residues long: Thymidylate kinase (208 aa).

Residue 10-17 (GPEGSGKS) participates in ATP binding.

Belongs to the thymidylate kinase family.

The enzyme catalyses dTMP + ATP = dTDP + ADP. Functionally, phosphorylation of dTMP to form dTDP in both de novo and salvage pathways of dTTP synthesis. This Bacillus cytotoxicus (strain DSM 22905 / CIP 110041 / 391-98 / NVH 391-98) protein is Thymidylate kinase.